We begin with the raw amino-acid sequence, 81 residues long: Protein L83L (81 aa).

Residues 1-28 (MDTSLKNNDGALEADNKNYQDYKDEPDK) are disordered. The segment covering 14–28 (ADNKNYQDYKDEPDK) has biased composition (basic and acidic residues).

The protein belongs to the asfivirus L83L family. As to quaternary structure, interacts with host IL1B.

The protein localises to the host cytoplasm. In terms of biological role, may subvert the host innate immune response by interacting with host IL1B and interfering with its function. This Ornithodoros (relapsing fever ticks) protein is Protein L83L.